Reading from the N-terminus, the 410-residue chain is Adenosylhomocysteinase (410 aa).

The substrate site is built by Asp-117 and Glu-142. Residue 143-145 (TTT) coordinates NAD(+). The substrate site is built by Lys-172 and Asp-176. Residues Asn-177, 206–211 (GYGYCG), Glu-229, 285–287 (AGH), and Asn-332 each bind NAD(+).

Belongs to the adenosylhomocysteinase family. NAD(+) is required as a cofactor.

The protein localises to the cytoplasm. It carries out the reaction S-adenosyl-L-homocysteine + H2O = L-homocysteine + adenosine. It functions in the pathway amino-acid biosynthesis; L-homocysteine biosynthesis; L-homocysteine from S-adenosyl-L-homocysteine: step 1/1. In terms of biological role, may play a key role in the regulation of the intracellular concentration of adenosylhomocysteine. This is Adenosylhomocysteinase from Thermoplasma volcanium (strain ATCC 51530 / DSM 4299 / JCM 9571 / NBRC 15438 / GSS1).